A 62-amino-acid chain; its full sequence is UPF0434 protein azo1471 (62 aa).

This sequence belongs to the UPF0434 family.

In Azoarcus sp. (strain BH72), this protein is UPF0434 protein azo1471.